The sequence spans 263 residues: MPYITKISAQKNNTERVNIFLDEKYAFSVDLDVLVQHDLKKGKELDEADIIDIQFGDAVKKGFQQAVDYLSYRMRSVKEVTDYLTKKEIPAPAISEIIHKLKHYKYVNDLEFAEAYVSTHRKTNSKGPSVLKKELKLKGIEDDHIEQALSQYPDDLQLEEAVKQVQKLVRKEKNRSTKEIEQRIKLQLQRKGFSFEIIDKALQEAYDGQEEEKEEEALLYMMEKAKRKVGYDGSFEKKMKVKQFLFRKGFDLDTIDHVLDKGE.

The protein belongs to the RecX family.

The protein resides in the cytoplasm. Its function is as follows. Modulates RecA activity. In Bacillus pumilus (strain SAFR-032), this protein is Regulatory protein RecX.